The primary structure comprises 149 residues: Large ribosomal subunit protein uL15 (149 aa).

Residues 1–61 are disordered; that stretch reads MELNSLRPAL…GGQMPLQRRL (61 aa). Positions 30 to 39 are enriched in basic residues; that stretch reads TATKGHKGQK.

The protein belongs to the universal ribosomal protein uL15 family. Part of the 50S ribosomal subunit.

Binds to the 23S rRNA. This Trichlorobacter lovleyi (strain ATCC BAA-1151 / DSM 17278 / SZ) (Geobacter lovleyi) protein is Large ribosomal subunit protein uL15.